Consider the following 61-residue polypeptide: Large ribosomal subunit protein eL24 (61 aa).

The Zn(2+) site is built by Cys-7, Cys-10, Cys-33, and Cys-37. The C4-type zinc-finger motif lies at 7 to 37 (CSFCGHEIPPGTGLMYVRNDGTMLWFCSSKC).

It belongs to the eukaryotic ribosomal protein eL24 family. Part of the 50S ribosomal subunit. Forms a cluster with proteins L3 and L14. Requires Zn(2+) as cofactor.

Functionally, binds to the 23S rRNA. The chain is Large ribosomal subunit protein eL24 from Saccharolobus islandicus (strain M.16.27) (Sulfolobus islandicus).